A 160-amino-acid chain; its full sequence is SsrA-binding protein (160 aa).

The protein belongs to the SmpB family.

It is found in the cytoplasm. In terms of biological role, required for rescue of stalled ribosomes mediated by trans-translation. Binds to transfer-messenger RNA (tmRNA), required for stable association of tmRNA with ribosomes. tmRNA and SmpB together mimic tRNA shape, replacing the anticodon stem-loop with SmpB. tmRNA is encoded by the ssrA gene; the 2 termini fold to resemble tRNA(Ala) and it encodes a 'tag peptide', a short internal open reading frame. During trans-translation Ala-aminoacylated tmRNA acts like a tRNA, entering the A-site of stalled ribosomes, displacing the stalled mRNA. The ribosome then switches to translate the ORF on the tmRNA; the nascent peptide is terminated with the 'tag peptide' encoded by the tmRNA and targeted for degradation. The ribosome is freed to recommence translation, which seems to be the essential function of trans-translation. The polypeptide is SsrA-binding protein (Salmonella arizonae (strain ATCC BAA-731 / CDC346-86 / RSK2980)).